We begin with the raw amino-acid sequence, 412 residues long: B3 domain-containing protein Os02g0683500 (412 aa).

Positions 1–87 (MEFTTSSRFS…GGGGGGGGEA (87 aa)) are disordered. Low complexity predominate over residues 30-65 (TATAEAAPAPTSSSSSPAHHAASASASASASGSSTP). Residues 73–86 (GASGSGGGGGGGGE) are compositionally biased toward gly residues. Residues 96–200 (FDKVVTPSDV…RHRLFIDWKR (105 aa)) constitute a DNA-binding region (TF-B3). The tract at residues 374–412 (RLLELPPHHHHGAESSAASSPSSSSSSKRDAHSALDLDL) is disordered. Low complexity predominate over residues 387 to 399 (ESSAASSPSSSSS). Positions 400-412 (SKRDAHSALDLDL) are enriched in basic and acidic residues.

It localises to the nucleus. The sequence is that of B3 domain-containing protein Os02g0683500 from Oryza sativa subsp. japonica (Rice).